The following is a 795-amino-acid chain: Protocadherin beta-12 (795 aa).

The first 26 residues, 1 to 26 (MENGGAGTLQIRQVLLFFVLLGMSQA), serve as a signal peptide directing secretion. At 27–690 (GSETGNFLVM…AQADSLTVYL (664 aa)) the chain is on the extracellular side. Cadherin domains lie at 35 to 133 (VMEE…SPVF), 138 to 242 (MLLE…SPEF), 247 to 347 (YEVK…APEI), 352 to 451 (ITSP…APAF), and 456 to 561 (YALF…SPFV). N-linked (GlcNAc...) asparagine glycosylation is found at asparagine 418, asparagine 436, asparagine 487, and asparagine 567. Positions 568–671 (GSAPCTELVP…LVDGFSQPYL (104 aa)) constitute a Cadherin 6 domain. The helical transmembrane segment at 691–711 (VVALASVSSLFLFSVLLFVAV) threads the bilayer. Topologically, residues 712-795 (RLCRRSRAAP…NPPFQNNLGF (84 aa)) are cytoplasmic.

The protein resides in the cell membrane. Its function is as follows. Potential calcium-dependent cell-adhesion protein. May be involved in the establishment and maintenance of specific neuronal connections in the brain. This Homo sapiens (Human) protein is Protocadherin beta-12 (PCDHB12).